A 1090-amino-acid chain; its full sequence is UPF0507 protein SCRG_01893 (1090 aa).

Residues 289–436 form the VPS9 domain; sequence FSVNQLLTDF…FEDFNKNTGN (148 aa).

It belongs to the UPF0507 family.

The protein is UPF0507 protein SCRG_01893 of Saccharomyces cerevisiae (strain RM11-1a) (Baker's yeast).